A 321-amino-acid polypeptide reads, in one-letter code: Iron(3+)-hydroxamate-binding protein YxeB (321 aa).

The N-terminal stretch at 1 to 20 is a signal peptide; sequence MKKNILLVGMLVLLLMFVSA. C21 is lipidated: N-palmitoyl cysteine. C21 carries S-diacylglycerol cysteine lipidation. Low complexity predominate over residues 24–33; sequence TASKGSSSDS. The tract at residues 24-48 is disordered; sequence TASKGSSSDSASEKTEMRTYKSPKG. In terms of domain architecture, Fe/B12 periplasmic-binding spans 58–316; that stretch reads RIVTDFYAGE…IITDMLIKRA (259 aa).

This sequence belongs to the bacterial solute-binding protein 8 family. The complex is composed of an ATP-binding protein (FhuC), two transmembrane proteins (FhuB and FhuG) and a solute-binding protein (FhuD or YxeB).

The protein localises to the cell membrane. It is found in the membrane raft. Functionally, part of the ABC transporter complex FhuCBGD involved in iron(3+)-hydroxamate import. Binds the iron(3+)-hydroxamate complex and transfers it to the membrane-bound permease. Partially required for the transport of desferrioxamine. This Bacillus subtilis (strain 168) protein is Iron(3+)-hydroxamate-binding protein YxeB (yxeB).